The primary structure comprises 754 residues: Protein NUCLEOLAR FACTOR 1 (754 aa).

Disordered stretches follow at residues 1–56 (MAPN…EAMV), 69–166 (SLGS…ELST), and 390–413 (EDTD…QKSS). Residues 42 to 52 (SPEESSIEAES) show a composition bias toward acidic residues. Basic and acidic residues predominate over residues 80-93 (MNKRRQREEEGKSD). Composition is skewed to acidic residues over residues 94–110 (TEED…ENSG) and 138–161 (DTQE…DEEV). Residues 402–413 (SKNGNSIKQKSS) are compositionally biased toward polar residues.

Belongs to the UTP25 family. Component of the ribosomal small subunit (SSU) processome composed of at least 40 protein subunits and snoRNA U3. Interacts with THAL in the nucleus. Preferentially expressed in differentiating cells in young tissues such as floral buds, ovules, embryos, secondary roots, pollen, young seedlings and vascular bundles. Observed ubiquitously.

It localises to the nucleus. The protein resides in the nucleolus. Functionally, DEAD-box RNA helicase-like protein required for pre-18S rRNA processing, specifically at sites A0, A1, and A2. Involved in the control of rRNA expression. Required for embryo development and female gametogenesis. This Arabidopsis thaliana (Mouse-ear cress) protein is Protein NUCLEOLAR FACTOR 1.